Here is a 96-residue protein sequence, read N- to C-terminus: Prokineticin Bm8-e (96 aa).

The first 19 residues, 1-19, serve as a signal peptide directing secretion; the sequence is MKCFAQIVVLLLVIAFSHG. 5 cysteine pairs are disulfide-bonded: Cys26–Cys38, Cys32–Cys50, Cys37–Cys78, Cys60–Cys86, and Cys80–Cys95.

It belongs to the AVIT (prokineticin) family. In terms of tissue distribution, expressed by the skin glands.

It localises to the secreted. Potent agonist for both PKR1/PROKR1 and PKR2/PROKR2, and inducer of a potent and long-lasting hyperalgesia. Also potentiates capsaicin-induced TRPV1 current, when tested on DRG neurons. At subnanomolar concentrations, this protein both induces potent chemotaxis of macrophages and stimulates LPS-induced production of the pro-inflammatory cytokines IL-1 and IL-12. In vivo, potently stimulates the contraction of the guinea-pig gastrointestinal (GI) smooth muscle (nanomolar concentration). The polypeptide is Prokineticin Bm8-e (Bombina maxima (Giant fire-bellied toad)).